Reading from the N-terminus, the 171-residue chain is Disulfide bond formation protein B (171 aa).

At 1–13 (MSALTRFAQSRLA) the chain is on the cytoplasmic side. The chain crosses the membrane as a helical span at residues 14–30 (WTLLLLTAVGLEACALF). Over 31-48 (FQHVMKLDPCVMCIYQRL) the chain is Periplasmic. C40 and C43 are joined by a disulfide. Residues 49–64 (AVLGVLTAGLIGVVGH) traverse the membrane as a helical segment. Residues 65-71 (QFRLLRF) are Cytoplasmic-facing. A helical transmembrane segment spans residues 72–89 (LGVLLWGVSAAWGLKLAL). The Periplasmic segment spans residues 90-144 (ELVEMQTNPSPFSTCSFLPEFPEWMPLHEWFPSVFLPTGMCTDIPWEMFGITMSQ). C104 and C130 are joined by a disulfide. The helical transmembrane segment at 145–163 (WMVVAFSTYLIALVVFIVP) threads the bilayer. At 164–171 (ALMPTKKA) the chain is on the cytoplasmic side.

This sequence belongs to the DsbB family.

It is found in the cell inner membrane. In terms of biological role, required for disulfide bond formation in some periplasmic proteins. Acts by oxidizing the DsbA protein. This Shewanella loihica (strain ATCC BAA-1088 / PV-4) protein is Disulfide bond formation protein B.